The following is a 275-amino-acid chain: Trans-aconitate 2-methyltransferase (275 aa).

It belongs to the methyltransferase superfamily. Tam family.

It localises to the cytoplasm. The catalysed reaction is trans-aconitate + S-adenosyl-L-methionine = (E)-3-(methoxycarbonyl)pent-2-enedioate + S-adenosyl-L-homocysteine. Its function is as follows. Catalyzes the S-adenosylmethionine monomethyl esterification of trans-aconitate. In Pseudomonas paraeruginosa (strain DSM 24068 / PA7) (Pseudomonas aeruginosa (strain PA7)), this protein is Trans-aconitate 2-methyltransferase.